A 348-amino-acid chain; its full sequence is Succinoglycan biosynthesis protein ExoO (348 aa).

The segment at 322-348 is disordered; it reads HSAPRAAPVTAAAERSPLGNDPRISKG. Residues 324–334 are compositionally biased toward low complexity; it reads APRAAPVTAAA.

This sequence belongs to the glycosyltransferase 2 family.

The protein resides in the cytoplasm. Its pathway is glycan metabolism; exopolysaccharide biosynthesis. Its function is as follows. Glycosyltransferase required for the synthesis of succinoglycan (EPS I). Needed for the addition of the fifth sugar (glucose), catalyzes the formation of a beta-1,6 linkage between the fourth and fifth sugar. The chain is Succinoglycan biosynthesis protein ExoO (exoO) from Rhizobium meliloti (strain 1021) (Ensifer meliloti).